Consider the following 469-residue polypeptide: Dynein axonemal assembly factor 11 (469 aa).

LRR repeat units lie at residues 20-43 (IFSLEEISLHQQDLERIEHIDKWC), 44-65 (RELKILYLQNNLIGKIENVSKL), 66-89 (KKLEYLNLALNNIEKIENLEGCES), and 90-110 (LQKLDLTVNFVGELSSINSLQ). The LRRCT domain maps to 114 to 135 (HLRELYLVGNPCAEYEGYRQYV). Basic and acidic residues-rich tracts occupy residues 179–213 (KRAAEREEARSKLQGKQKESRKTQEKKPGFDRRWY) and 261–286 (SRLETHRYLEEKRKSKESSSEGELKK). Disordered stretches follow at residues 179–290 (KRAA…KPPR) and 436–469 (KTQAQGPLQFHKNKVKDTEDSEDFIDNTDVPPLM).

Belongs to the tilB family.

The protein resides in the cytoplasm. It localises to the cell projection. The protein localises to the cilium. Its subcellular location is the dynein axonemal particle. It is found in the flagellum. Its function is as follows. Involved in dynein arm assembly, is important for expression and transporting outer dynein arm (ODA) proteins from the cytoplasm to the cilia. The chain is Dynein axonemal assembly factor 11 (dnaaf11) from Xenopus laevis (African clawed frog).